We begin with the raw amino-acid sequence, 332 residues long: L-lactate dehydrogenase A chain (332 aa).

Residues G29–K57 and R99 contribute to the NAD(+) site. The substrate site is built by R106, N138, and R169. NAD(+) is bound at residue N138. H193 functions as the Proton acceptor in the catalytic mechanism. Residue T248 coordinates substrate.

This sequence belongs to the LDH/MDH superfamily. LDH family. As to quaternary structure, homotetramer.

It is found in the cytoplasm. It carries out the reaction (S)-lactate + NAD(+) = pyruvate + NADH + H(+). The protein operates within fermentation; pyruvate fermentation to lactate; (S)-lactate from pyruvate: step 1/1. In terms of biological role, interconverts simultaneously and stereospecifically pyruvate and lactate with concomitant interconversion of NADH and NAD(+). This Fundulus heteroclitus (Killifish) protein is L-lactate dehydrogenase A chain (ldha).